A 144-amino-acid chain; its full sequence is Large ribosomal subunit protein uL13 (144 aa).

The protein belongs to the universal ribosomal protein uL13 family. Part of the 50S ribosomal subunit.

Its function is as follows. This protein is one of the early assembly proteins of the 50S ribosomal subunit, although it is not seen to bind rRNA by itself. It is important during the early stages of 50S assembly. This chain is Large ribosomal subunit protein uL13, found in Nitrosomonas europaea (strain ATCC 19718 / CIP 103999 / KCTC 2705 / NBRC 14298).